Here is a 1649-residue protein sequence, read N- to C-terminus: eIF-2-alpha kinase GCN2 (1649 aa).

The interval 1–26 is disordered; the sequence is MAGGRGAAGRGPAEPQESYSQRQDHE. The RWD domain maps to 25 to 137; that stretch reads HELQALEAIY…HHVQSFLSEH (113 aa). Residues 146–205 adopt a coiled-coil conformation; sequence HEEMLERQAQEKQQRLLEARQKEEQEQREILHEIQKRKEEIKEEKKRKEMAKQERLEITS. The tract at residues 227 to 260 is disordered; that stretch reads HGGSPDFVGNGKARAHSSGRSRRERQYSVCSGEA. Residue Ser230 is modified to Phosphoserine. Residues 239–249 show a composition bias toward basic residues; that stretch reads ARAHSSGRSRR. Protein kinase domains are found at residues 296-539 and 590-1001; these read VYNA…HSFI and FEEL…SELL. Residues 596–604 and Lys619 contribute to the ATP site; that span reads LGKGAFGAV. The interval 662-785 is disordered; sequence PAVPGTPPPD…CNEKDSRHEI (124 aa). Phosphothreonine is present on Thr667. The segment covering 705-721 has biased composition (polar residues); the sequence is LSSSVEWSTSAERSNSA. 2 stretches are compositionally biased toward acidic residues: residues 731-740 and 754-764; these read SSDEEDEDER and SDSDIIFDNED. Residue Asp847 is the Proton acceptor of the active site. A Phosphothreonine modification is found at Thr870. Phosphothreonine; by autocatalysis is present on residues Thr899 and Thr904. Positions 1022-1493 are histidyl-tRNA synthetase-like; sequence TDGKAYRTMM…DHVMQKLRTK (472 aa). Position 1259 is an N6-acetyllysine (Lys1259).

The protein belongs to the protein kinase superfamily. Ser/Thr protein kinase family. GCN2 subfamily. As to quaternary structure, homodimer; homodimerization is important for kinase activation by uncharged tRNAs. Interacts with GCN1; this interaction stimulates EIF2AK4/GCN2 kinase activity and is impaired by IMPACT upon a variety of stress conditions, such as amino acid depletion, UV-C irradiation, proteasome inhibitor treatment and glucose deprivation. Interacts with DNAJC3; this interaction inhibits EIF2AK4/GCN2 kinase activity during endoplasmic reticulum (ER), hypothermic and amino acid-starving stress conditions. Interacts with MAP3K20; activates EIF2AK4/GCN2 kinase activity in response to moderate ribotoxic stress. Post-translationally, autophosphorylated; autophosphorylation on Thr-899 is increased upon amino acid starvation and in UV irradiation cells and inhibited in presence of IMPACT.

It localises to the cytoplasm. It carries out the reaction L-seryl-[protein] + ATP = O-phospho-L-seryl-[protein] + ADP + H(+). It catalyses the reaction L-threonyl-[protein] + ATP = O-phospho-L-threonyl-[protein] + ADP + H(+). Functionally, metabolic-stress sensing protein kinase that phosphorylates the alpha subunit of eukaryotic translation initiation factor 2 (EIF2S1/eIF-2-alpha) in response to low amino acid availability. Plays a role as an activator of the integrated stress response (ISR) required for adaptation to amino acid starvation. EIF2S1/eIF-2-alpha phosphorylation in response to stress converts EIF2S1/eIF-2-alpha into a global protein synthesis inhibitor, leading to a global attenuation of cap-dependent translation, and thus to a reduced overall utilization of amino acids, while concomitantly initiating the preferential translation of ISR-specific mRNAs, such as the transcriptional activator ATF4, and hence allowing ATF4-mediated reprogramming of amino acid biosynthetic gene expression to alleviate nutrient depletion. Required for the translational induction of protein kinase PRKCH following amino acid starvation. Binds uncharged tRNAs. Involved in cell cycle arrest by promoting cyclin D1 mRNA translation repression after the unfolded protein response pathway (UPR) activation or cell cycle inhibitor CDKN1A/p21 mRNA translation activation in response to amino acid deprivation. Plays a role in the consolidation of synaptic plasticity, learning as well as formation of long-term memory. Plays a role in neurite outgrowth inhibition. Plays a role in feeding behavior to maintain amino acid homeostasis; contributes to the innate aversion toward diets of imbalanced amino acid composition. Plays a proapoptotic role in response to glucose deprivation. Promotes global cellular protein synthesis repression in response to UV irradiation independently of the stress-activated protein kinase/c-Jun N-terminal kinase (SAPK/JNK) and p38 MAPK signaling pathways. Plays a role in the antiviral response against alphavirus infection; impairs early viral mRNA translation of the incoming genomic virus RNA, thus preventing alphavirus replication. This chain is eIF-2-alpha kinase GCN2, found in Rattus norvegicus (Rat).